Here is a 254-residue protein sequence, read N- to C-terminus: Alcohol dehydrogenase (254 aa).

Residue F10–L33 participates in NAD(+) binding. Substrate is bound at residue S138. Y151 (proton acceptor) is an active-site residue.

This sequence belongs to the short-chain dehydrogenases/reductases (SDR) family. As to quaternary structure, homodimer.

It carries out the reaction a primary alcohol + NAD(+) = an aldehyde + NADH + H(+). The catalysed reaction is a secondary alcohol + NAD(+) = a ketone + NADH + H(+). This Drosophila affinidisjuncta (Fruit fly) protein is Alcohol dehydrogenase (Adh).